A 604-amino-acid polypeptide reads, in one-letter code: Sulfite reductase [NADPH] flavoprotein alpha-component (604 aa).

Positions 66 to 204 (VTVLSASQTG…AADGWTGRIV (139 aa)) constitute a Flavodoxin-like domain. FMN is bound by residues 72 to 77 (SQTGNA), 119 to 122 (STQG), and 155 to 164 (LGDSSYPNFC). A disordered region spans residues 212–231 (AKNRATPAPQTTPPAGLQTA). Residues 216–231 (ATPAPQTTPPAGLQTA) show a composition bias toward low complexity. The FAD-binding FR-type domain occupies 239–453 (ADPFPAALLA…VERNDGFRLP (215 aa)). FAD-binding positions include T327, Q361, 391–394 (RLYS), 409–411 (TVG), and 424–427 (GGAS). NADP(+)-binding positions include 524–525 (SR), 530–534 (KIYVQ), and D566. Y604 lines the FAD pocket.

This sequence belongs to the NADPH-dependent sulphite reductase flavoprotein subunit CysJ family. It in the N-terminal section; belongs to the flavodoxin family. In the C-terminal section; belongs to the flavoprotein pyridine nucleotide cytochrome reductase family. In terms of assembly, alpha(8)-beta(8). The alpha component is a flavoprotein, the beta component is a hemoprotein. The cofactor is FAD. Requires FMN as cofactor.

The enzyme catalyses hydrogen sulfide + 3 NADP(+) + 3 H2O = sulfite + 3 NADPH + 4 H(+). Its pathway is sulfur metabolism; hydrogen sulfide biosynthesis; hydrogen sulfide from sulfite (NADPH route): step 1/1. Its function is as follows. Component of the sulfite reductase complex that catalyzes the 6-electron reduction of sulfite to sulfide. This is one of several activities required for the biosynthesis of L-cysteine from sulfate. The flavoprotein component catalyzes the electron flow from NADPH -&gt; FAD -&gt; FMN to the hemoprotein component. The sequence is that of Sulfite reductase [NADPH] flavoprotein alpha-component from Neisseria meningitidis serogroup C / serotype 2a (strain ATCC 700532 / DSM 15464 / FAM18).